We begin with the raw amino-acid sequence, 673 residues long: UvrABC system protein B (673 aa).

Positions 26-183 (ANFEAGLAKQ…RHLTDLQYTR (158 aa)) constitute a Helicase ATP-binding domain. ATP is bound at residue 39–46 (GVTGSGKT). A Beta-hairpin motif is present at residues 92-115 (YYDYYQPEAYVPSSDTFIEKDSSI). Residues 431 to 597 (QVDDLMSEIH…SVERPISDIM (167 aa)) form the Helicase C-terminal domain. The segment at 601-631 (REDAAEKKSGKGRSKSRQVAEETPDYRAMKP) is disordered. The segment covering 618 to 630 (QVAEETPDYRAMK) has biased composition (basic and acidic residues). In terms of domain architecture, UVR spans 635 to 670 (AGKLKSLEQKMYQHAKDLEFEAAAQIRDQIQKLKTA).

This sequence belongs to the UvrB family. In terms of assembly, forms a heterotetramer with UvrA during the search for lesions. Interacts with UvrC in an incision complex.

It is found in the cytoplasm. Its function is as follows. The UvrABC repair system catalyzes the recognition and processing of DNA lesions. A damage recognition complex composed of 2 UvrA and 2 UvrB subunits scans DNA for abnormalities. Upon binding of the UvrA(2)B(2) complex to a putative damaged site, the DNA wraps around one UvrB monomer. DNA wrap is dependent on ATP binding by UvrB and probably causes local melting of the DNA helix, facilitating insertion of UvrB beta-hairpin between the DNA strands. Then UvrB probes one DNA strand for the presence of a lesion. If a lesion is found the UvrA subunits dissociate and the UvrB-DNA preincision complex is formed. This complex is subsequently bound by UvrC and the second UvrB is released. If no lesion is found, the DNA wraps around the other UvrB subunit that will check the other stand for damage. This Xanthomonas oryzae pv. oryzae (strain PXO99A) protein is UvrABC system protein B.